The chain runs to 575 residues: Intermediate filament protein ifa-1 (575 aa).

Disordered stretches follow at residues 1-30 (MMEI…TGNV) and 45-72 (SGAG…EKKE). A head region spans residues 1-72 (MMEITRETMS…RDSREREKKE (72 aa)). Residues 7-17 (ETMSFTSTTPS) show a composition bias toward polar residues. A compositionally biased stretch (basic and acidic residues) spans 63–72 (RDSREREKKE). Residues 69–422 (EKKEMSDLND…KMLEGEENRA (354 aa)) form the IF rod domain. Residues 73–104 (MSDLNDRLASYIEKVRFLEAQNRKLAADLDAL) form a coil 1A region. The segment at 105 to 118 (RSKWGKDTHNIRNM) is linker 1. Positions 119–256 (YEGELVDAQK…RVHDNEIKEL (138 aa)) are coil 1B. Residues 257 to 274 (QTLASRDTTPENREFFKN) are linker 12. Positions 275–422 (ELSSAIRDIR…KMLEGEENRA (148 aa)) are coil 2. The segment at 423 to 572 (GLKQLVEQVV…EERATHIQRQ (150 aa)) is tail. The LTD domain maps to 455–572 (SRQSFQRSAK…EERATHIQRQ (118 aa)).

This sequence belongs to the intermediate filament family. Forms some heteromeric filaments with ifb-1. As to expression, isoform d is abundantly expressed in the marginal cells of the pharynx, forming apicobasally oriented thick filament bundles that are attached to the apical and basal plasma membrane by hemi-adherens junctions. Expression of isoform c is also seen in the excretory cells and in the uterus. Isoform c is detectable in the amphid sensory neurins and the pharyngeal-intestinal valve. Both isoform c and isoform d are expressed in the rectum and vulva and in some neurons of the tail. In larvae, expression is seen in the excretory cell, the vulva, the rectum and in the thick filament bundles of the pharynx. Expression in pharynx begins in late embryos.

The protein resides in the cytoplasm. In terms of biological role, cytoplasmic intermediate filaments make up the structural component of the cytoskeleton providing mechanical strength to cells. Essential protein required during embryogenesis especially for survival past the L1 larva stage, involved in intestine morphogenesis. In Caenorhabditis elegans, this protein is Intermediate filament protein ifa-1 (ifa-1).